The chain runs to 286 residues: ATP synthase gamma chain (286 aa).

Belongs to the ATPase gamma chain family. As to quaternary structure, F-type ATPases have 2 components, CF(1) - the catalytic core - and CF(0) - the membrane proton channel. CF(1) has five subunits: alpha(3), beta(3), gamma(1), delta(1), epsilon(1). CF(0) has three main subunits: a, b and c.

The protein resides in the cell inner membrane. Produces ATP from ADP in the presence of a proton gradient across the membrane. The gamma chain is believed to be important in regulating ATPase activity and the flow of protons through the CF(0) complex. This chain is ATP synthase gamma chain, found in Pseudomonas fluorescens (strain SBW25).